A 262-amino-acid polypeptide reads, in one-letter code: Methionine-rich nacre protein (262 aa).

The N-terminal stretch at 1-22 (MSIMRRILCLAVVIFIINDVSS) is a signal peptide. A compositionally biased stretch (low complexity) spans 26–35 (GNNKNWKKNG). The segment at 26-84 (GNNKNWKKNGMSLSSPGNKKPTGNNAVPQKSKMNNMNQNSLSQPKRSSPPGNSMYNMAN) is disordered. Polar residues predominate over residues 36–84 (MSLSSPGNKKPTGNNAVPQKSKMNNMNQNSLSQPKRSSPPGNSMYNMAN).

Expressed in mantle and, after secretion, incorporated into acid-insoluble nacre matrix of the shell (at protein level). Expressed primarily in the mantle with highest level in the mantle pallium and lower level in the mantle edge.

It localises to the secreted. This is Methionine-rich nacre protein from Pinctada maxima (Silver-lipped pearl oyster).